Consider the following 5634-residue polypeptide: Hemicentin-1 (5634 aa).

The first 21 residues, 1-21, serve as a signal peptide directing secretion; it reads MIAQEVVHTVFLVALFRSSLA. Positions 41 to 216 constitute a VWFA domain; that stretch reads TLAFVFDVTG…EVLKWVEEAV (176 aa). 29 Ig-like C2-type domains span residues 431-517, 520-607, 612-697, 702-788, 793-883, 890-976, 981-1067, 1072-1166, 1171-1254, 1261-1353, 1357-1446, 1451-1540, 1545-1633, 1638-1723, 1732-1820, 1825-1913, 1918-2006, 2011-2096, 2103-2189, 2194-2284, 2289-2378, 2383-2472, 2477-2565, 2570-2661, 2665-2762, 2765-2863, 2867-2958, 2962-3050, and 3055-3145; these read PKVT…FDVS, PPII…VFLT, PKVT…STLR, PKLV…LTLD, PVFI…TTVT, PLIG…TSVA, PSIQ…VQLT, PRVF…VKLS, PKIQ…AEVT, PSVE…YNLK, PPVI…FSVN, PSIL…IKLT, PSIK…FHVD, PTIE…REIK, PAVE…FEVT, PTIK…TQLH, PSLD…YSLQ, PSIS…RDID, PNIM…YNVN, PSIY…YNLQ, PSIT…YDLS, PSII…FGLS, PHIV…FRLN, PTIA…YEVK, PPII…VNIQ, PSFQ…YDVH, PPVI…FNLN, PPSV…VSLT, and PSIK…FHLN. 2 cysteine pairs are disulfide-bonded: cysteine 451/cysteine 499 and cysteine 541/cysteine 591. Residue threonine 615 is glycosylated (O-linked (GalNAc...) threonine). 11 disulfide bridges follow: cysteine 633–cysteine 681, cysteine 723–cysteine 772, cysteine 814–cysteine 867, cysteine 911–cysteine 960, cysteine 1002–cysteine 1051, cysteine 1101–cysteine 1150, cysteine 1192–cysteine 1240, cysteine 1287–cysteine 1337, cysteine 1381–cysteine 1430, cysteine 1474–cysteine 1524, and cysteine 1568–cysteine 1617. Residues threonine 1292 and threonine 1386 are each glycosylated (O-linked (GalNAc...) threonine). An O-linked (GalNAc...) threonine glycan is attached at threonine 1639. Disulfide bonds link cysteine 1662/cysteine 1711 and cysteine 1755/cysteine 1804. A glycan (O-linked (GalNAc...) threonine) is linked at threonine 1826. 14 disulfides stabilise this stretch: cysteine 1847–cysteine 1897, cysteine 1941–cysteine 1990, cysteine 2032–cysteine 2082, cysteine 2124–cysteine 2173, cysteine 2217–cysteine 2268, cysteine 2313–cysteine 2362, cysteine 2407–cysteine 2456, cysteine 2500–cysteine 2549, cysteine 2596–cysteine 2645, cysteine 2695–cysteine 2744, cysteine 2798–cysteine 2847, cysteine 2893–cysteine 2942, cysteine 2985–cysteine 3034, and cysteine 3080–cysteine 3129. An O-linked (GalNAc...) threonine glycan is attached at threonine 3151. Ig-like C2-type domains are found at residues 3155–3227, 3244–3334, 3339–3428, 3433–3515, 3526–3614, 3619–3707, 3712–3798, 3803–3891, 3896–3982, 3987–4073, 4077–4163, 4168–4252, 4259–4332, 4347–4434, and 4439–4526; these read PETE…VASN, PSVA…FNLN, PKIR…YSLQ, PNMD…GEVS, PHIN…YLVR, PNIA…FNLT, PSIG…IDLQ, PSIA…VDLT, PTIA…VTLR, PVIQ…VKLN, PPVI…STLT, PRIQ…RIVT, PTFT…AENS, PPVF…MSLT, and PIIT…VIVQ. Disulfide bonds link cysteine 3172/cysteine 3223, cysteine 3267/cysteine 3318, cysteine 3363/cysteine 3412, cysteine 3456/cysteine 3505, cysteine 3549/cysteine 3598, cysteine 3642/cysteine 3691, cysteine 3733/cysteine 3782, and cysteine 3824/cysteine 3875. The O-linked (GalNAc...) threonine glycan is linked to threonine 3897. Disulfide bonds link cysteine 3917-cysteine 3966, cysteine 4008-cysteine 4057, cysteine 4099-cysteine 4147, cysteine 4189-cysteine 4238, cysteine 4280-cysteine 4327, cysteine 4370-cysteine 4418, cysteine 4460-cysteine 4508, cysteine 4540-cysteine 4577, cysteine 4544-cysteine 4582, cysteine 4555-cysteine 4567, cysteine 4597-cysteine 4634, cysteine 4601-cysteine 4639, cysteine 4612-cysteine 4624, cysteine 4654-cysteine 4691, cysteine 4658-cysteine 4696, cysteine 4669-cysteine 4681, cysteine 4711-cysteine 4748, cysteine 4715-cysteine 4753, cysteine 4726-cysteine 4738, cysteine 4768-cysteine 4805, cysteine 4772-cysteine 4810, cysteine 4783-cysteine 4795, cysteine 4825-cysteine 4862, cysteine 4829-cysteine 4867, and cysteine 4840-cysteine 4852. The O-linked (GalNAc...) threonine glycan is linked to threonine 4379. TSP type-1 domains lie at 4528 to 4583, 4585 to 4640, 4642 to 4697, 4699 to 4754, 4756 to 4811, and 4813 to 4868; these read HGGF…KLCP, DGHW…RPCP, HGVW…RHCP, DGRW…DPCP, HGNW…DMCP, and DGSW…QACP. The region spanning 4870–5092 is the Nidogen G2 beta-barrel domain; the sequence is GPQRARGSVI…SKGDRSNQCP (223 aa). An EGF-like 1; calcium-binding domain is found at 5106–5145; the sequence is DEDECTAGNPCSHTCHNAIGAYYCSCPKGLTIAADGRTCQ. Disulfide bonds link cysteine 5110–cysteine 5120, cysteine 5116–cysteine 5129, and cysteine 5131–cysteine 5144. One can recognise an EGF-like 2; calcium-binding domain in the interval 5146–5189; the sequence is DIDECALGGHTCRAGQDCDNTIGSYRCVVHCGTGFRRTSDGLSC. Residues 5191 to 5228 enclose the EGF-like 3; calcium-binding domain; the sequence is DINECQESSPCHQRCFNVIGSFHCGCEAGYQLKGRKCI. Intrachain disulfides connect cysteine 5195-cysteine 5205, cysteine 5201-cysteine 5214, and cysteine 5216-cysteine 5227. The 41-residue stretch at 5229–5269 folds into the EGF-like 4; calcium-binding domain; the sequence is DVNECRQNVCRPDQHCKNTRGGYKCIDLCPSGMTKAENGTC. An EGF-like 5; calcium-binding domain is found at 5271-5306; that stretch reads DIDECKDGTHQCRYNQICENTRGSYRCACPRGYRSQ. 8 cysteine pairs are disulfide-bonded: cysteine 5275-cysteine 5288, cysteine 5282-cysteine 5297, cysteine 5318-cysteine 5329, cysteine 5325-cysteine 5338, cysteine 5340-cysteine 5353, cysteine 5435-cysteine 5445, cysteine 5441-cysteine 5454, and cysteine 5456-cysteine 5469. The EGF-like 6; calcium-binding domain maps to 5314 to 5354; the sequence is DINECEQVPKPCAHQCSNSPGSFKCICLPGQQLLGDGKSCA. The EGF-like 7; calcium-binding domain occupies 5431–5470; the sequence is DIDECQNRDTCQHECKNTIGSYQCVCPPGYRLMLNGKTCQ.

In terms of tissue distribution, in the kidney, expressed in the glomerulus (at protein level). Expressed in whisker and hair follicles, eye, tongue, and splenic and lymph node conduits (at protein level). In the embryo, localizes to the cleavage furrow at the two-cell stage (at protein level). In neonatal skin, expressed throughout the dermis (at protein level). In adult skin, strongly concentrated at the dermal side of the basement membrane but not detectable in the deeper dermis. Shows tendon-specific localization at the myotendinous junction and is also detected in the perichondrium (at protein level). Expressed by chondrocytes residing in articular cartilage and the femoral growth plate of 52 week old mice (at protein level). Expressed in vascular endothelial cells in coronary arteries and sparsely in endocardial endothelium (at protein level). Expressed in skin, tongue, lung and eye. At 14.5 dpc, expressed in the vibrissae, dermis, forelimb, kidney, intestine, lung and iliac cartilage where expression is found mainly in mesenchymal cells.

It localises to the secreted. The protein localises to the extracellular space. The protein resides in the extracellular matrix. Its subcellular location is the basement membrane. It is found in the cytoplasm. It localises to the cell junction. The protein localises to the cleavage furrow. Its function is as follows. Involved in transforming growth factor beta-mediated rearrangement of the podocyte cytoskeleton which includes reduction of F-actin fibers and broadening, flattening and elongation of podocytes. Plays a role in basement membrane organization. May promote cleavage furrow maturation during cytokinesis in preimplantation embryos. May play a role in the architecture of adhesive and flexible epithelial cell junctions. May play a role during myocardial remodeling by imparting an effect on cardiac fibroblast migration. The protein is Hemicentin-1 of Mus musculus (Mouse).